A 548-amino-acid polypeptide reads, in one-letter code: ATP synthase subunit alpha (548 aa).

An ATP-binding site is contributed by 172 to 179 (GDRKTGKT). The interval 526-548 (AEAMDEADVEKESVKVRKPAPKK) is disordered.

It belongs to the ATPase alpha/beta chains family. F-type ATPases have 2 components, CF(1) - the catalytic core - and CF(0) - the membrane proton channel. CF(1) has five subunits: alpha(3), beta(3), gamma(1), delta(1), epsilon(1). CF(0) has three main subunits: a(1), b(2) and c(9-12). The alpha and beta chains form an alternating ring which encloses part of the gamma chain. CF(1) is attached to CF(0) by a central stalk formed by the gamma and epsilon chains, while a peripheral stalk is formed by the delta and b chains.

It localises to the cell membrane. The enzyme catalyses ATP + H2O + 4 H(+)(in) = ADP + phosphate + 5 H(+)(out). Functionally, produces ATP from ADP in the presence of a proton gradient across the membrane. The alpha chain is a regulatory subunit. In Mycolicibacterium vanbaalenii (strain DSM 7251 / JCM 13017 / BCRC 16820 / KCTC 9966 / NRRL B-24157 / PYR-1) (Mycobacterium vanbaalenii), this protein is ATP synthase subunit alpha.